A 246-amino-acid chain; its full sequence is UDP-N-acetyl-D-mannosaminuronic acid transferase (246 aa).

The protein belongs to the glycosyltransferase 26 family.

The enzyme catalyses UDP-N-acetyl-alpha-D-mannosaminouronate + N-acetyl-alpha-D-glucosaminyl-di-trans,octa-cis-undecaprenyl diphosphate = beta-D-ManNAcA-(1-&gt;4)-alpha-D-GlcNAc-di-trans,octa-cis-undecaprenyl diphosphate + UDP + H(+). It functions in the pathway bacterial outer membrane biogenesis; enterobacterial common antigen biosynthesis. In terms of biological role, catalyzes the synthesis of Und-PP-GlcNAc-ManNAcA (Lipid II), the second lipid-linked intermediate involved in enterobacterial common antigen (ECA) synthesis. The sequence is that of UDP-N-acetyl-D-mannosaminuronic acid transferase from Escherichia coli O6:K15:H31 (strain 536 / UPEC).